Here is a 217-residue protein sequence, read N- to C-terminus: Somatotropin (217 aa).

The signal sequence occupies residues 1-26 (MATGSHTTTLLLAVALLGLPWPQEAG). Zn(2+) is bound at residue His46. Cys79 and Cys190 are joined by a disulfide. A Zn(2+)-binding site is contributed by Glu199. A disulfide bond links Cys207 and Cys215.

Belongs to the somatotropin/prolactin family.

The protein resides in the secreted. Its function is as follows. Plays an important role in growth control. Its major role in stimulating body growth is to stimulate the liver and other tissues to secrete IGF1. It stimulates both the differentiation and proliferation of myoblasts. It also stimulates amino acid uptake and protein synthesis in muscle and other tissues. The chain is Somatotropin (GH1) from Galago senegalensis (Northern lesser bushbaby).